A 130-amino-acid chain; its full sequence is Small ribosomal subunit protein uS11c (130 aa).

The protein belongs to the universal ribosomal protein uS11 family. As to quaternary structure, part of the 30S ribosomal subunit.

Its subcellular location is the plastid. The protein resides in the chloroplast. This Zygnema circumcarinatum (Green alga) protein is Small ribosomal subunit protein uS11c.